A 669-amino-acid polypeptide reads, in one-letter code: tRNA 5-methylaminomethyl-2-thiouridine biosynthesis bifunctional protein MnmC (669 aa).

The interval 1–246 is tRNA (mnm(5)s(2)U34)-methyltransferase; the sequence is MIKNANIHFN…KRSMLIGTLK (246 aa). The interval 271–669 is FAD-dependent cmnm(5)s(2)U34 oxidoreductase; sequence IGGGIASSCI…IVRDLIRNKI (399 aa).

In the N-terminal section; belongs to the methyltransferase superfamily. tRNA (mnm(5)s(2)U34)-methyltransferase family. This sequence in the C-terminal section; belongs to the DAO family. The cofactor is FAD.

The protein localises to the cytoplasm. It carries out the reaction 5-aminomethyl-2-thiouridine(34) in tRNA + S-adenosyl-L-methionine = 5-methylaminomethyl-2-thiouridine(34) in tRNA + S-adenosyl-L-homocysteine + H(+). In terms of biological role, catalyzes the last two steps in the biosynthesis of 5-methylaminomethyl-2-thiouridine (mnm(5)s(2)U) at the wobble position (U34) in tRNA. Catalyzes the FAD-dependent demodification of cmnm(5)s(2)U34 to nm(5)s(2)U34, followed by the transfer of a methyl group from S-adenosyl-L-methionine to nm(5)s(2)U34, to form mnm(5)s(2)U34. The protein is tRNA 5-methylaminomethyl-2-thiouridine biosynthesis bifunctional protein MnmC of Pseudoalteromonas translucida (strain TAC 125).